A 294-amino-acid polypeptide reads, in one-letter code: MIKKIFALPVIEQISPVLSRRKLDELDLIVVDHPQVKASFALQGAHLLSWKPAGEEEVLWLSNNTPFKNGVAIRGGVPVCWPWFGPAAQQGLPAHGFARNLPWTLKSHHEDADGVALTFELTQSEETKKFWPHDFTLLAHFRVGKTCEIDLESHGEFETTSALHTYFNVGDIAKVSVSGLGDRFIDKVNDAKENVLTDGIQTFPDRTDRVYLNPQDCSVINDEALNRIIAVGHQHHLNVVGWNPGPALSISMGDMPDDGYKTFVCVETAYASETQKVTKEKPAHLAQSIRVAKR.

Substrate is bound by residues R74 and R99. H164 is an active-site residue. Substrate is bound at residue D208. The active site involves E267.

The protein belongs to the glucose-6-phosphate 1-epimerase family. In terms of assembly, monomer in solution.

It catalyses the reaction alpha-D-glucose 6-phosphate = beta-D-glucose 6-phosphate. The polypeptide is Putative glucose-6-phosphate 1-epimerase (yeaD) (Escherichia coli (strain K12)).